The following is a 230-amino-acid chain: 5'-methylthioadenosine/S-adenosylhomocysteine nucleosidase (230 aa).

E12 serves as the catalytic Proton acceptor. Residues G78, I152, and 173-174 each bind substrate; that span reads ME. The active-site Proton donor is the D197.

This sequence belongs to the PNP/UDP phosphorylase family. MtnN subfamily.

It catalyses the reaction S-adenosyl-L-homocysteine + H2O = S-(5-deoxy-D-ribos-5-yl)-L-homocysteine + adenine. The catalysed reaction is S-methyl-5'-thioadenosine + H2O = 5-(methylsulfanyl)-D-ribose + adenine. It carries out the reaction 5'-deoxyadenosine + H2O = 5-deoxy-D-ribose + adenine. It functions in the pathway amino-acid biosynthesis; L-methionine biosynthesis via salvage pathway; S-methyl-5-thio-alpha-D-ribose 1-phosphate from S-methyl-5'-thioadenosine (hydrolase route): step 1/2. In terms of biological role, catalyzes the irreversible cleavage of the glycosidic bond in both 5'-methylthioadenosine (MTA) and S-adenosylhomocysteine (SAH/AdoHcy) to adenine and the corresponding thioribose, 5'-methylthioribose and S-ribosylhomocysteine, respectively. Also cleaves 5'-deoxyadenosine, a toxic by-product of radical S-adenosylmethionine (SAM) enzymes, into 5-deoxyribose and adenine. The protein is 5'-methylthioadenosine/S-adenosylhomocysteine nucleosidase of Haemophilus influenzae (strain 86-028NP).